The primary structure comprises 873 residues: DNA mismatch repair protein MutS (873 aa).

Residues 1-34 (MAAIPTPRLHRGVTHLSRQTKSRARHPMSTPQHT) are disordered. Over residues 8–26 (RLHRGVTHLSRQTKSRARH) the composition is skewed to basic residues. 635 to 642 (GPNMGGKS) is a binding site for ATP.

Belongs to the DNA mismatch repair MutS family.

Functionally, this protein is involved in the repair of mismatches in DNA. It is possible that it carries out the mismatch recognition step. This protein has a weak ATPase activity. This Chromobacterium violaceum (strain ATCC 12472 / DSM 30191 / JCM 1249 / CCUG 213 / NBRC 12614 / NCIMB 9131 / NCTC 9757 / MK) protein is DNA mismatch repair protein MutS.